Here is a 319-residue protein sequence, read N- to C-terminus: Taste receptor type 2 member 39 (319 aa).

At 1–16 (MAQPSNYWKQDVLPLS) the chain is on the extracellular side. The chain crosses the membrane as a helical span at residues 17 to 37 (ILMLTLVATECTIGIIASGIV). The Cytoplasmic portion of the chain corresponds to 38–65 (MAVNAVSWVQKKAISITTRILLLLSVSR). A helical membrane pass occupies residues 66 to 86 (IGLQSIMLIEITSSIFNVAFY). Residues 87 to 97 (NSVLYRVSNVS) lie on the Extracellular side of the membrane. N-linked (GlcNAc...) asparagine glycosylation occurs at asparagine 95. The chain crosses the membrane as a helical span at residues 98–118 (FVFLNYCSLWFAALLSFFHFV). At 119 to 137 (KIANFSYPLFFKLKWRISE) the chain is on the cytoplasmic side. The helical transmembrane segment at 138-158 (LMPWLLWLSVFISFSSSMFFS) threads the bilayer. At 159–194 (KHKFTVNNNNSLSNNICNFTMKLYVVETNVVNVSFL) the chain is on the extracellular side. 3 N-linked (GlcNAc...) asparagine glycosylation sites follow: asparagine 167, asparagine 176, and asparagine 190. A helical membrane pass occupies residues 195 to 215 (FISGILPPLTMFVATATLLIF). Topologically, residues 216–247 (SLRRHTLNMRNSATGSRNPCIEAHMQAIKETS) are cytoplasmic. The chain crosses the membrane as a helical span at residues 248–268 (CFLFLYILNAAALLLSTSNIV). Residues 269-273 (DASLF) are Extracellular-facing. Residues 274 to 294 (WSIVIRIVLPVYPAGHSVLLI) traverse the membrane as a helical segment. Over 295–319 (QNNPGLRRTWKHLQSQIHLYLQNRF) the chain is Cytoplasmic.

Belongs to the G-protein coupled receptor T2R family.

The protein localises to the membrane. In terms of biological role, putative taste receptor which may play a role in the perception of bitterness. The polypeptide is Taste receptor type 2 member 39 (Tas2r39) (Mus musculus (Mouse)).